The following is a 213-amino-acid chain: Maleamate amidohydrolase (213 aa).

Residue cysteine 154 is the Nucleophile of the active site.

It belongs to the isochorismatase family.

The catalysed reaction is maleamate + H2O = maleate + NH4(+). It functions in the pathway cofactor degradation; nicotinate degradation. Its function is as follows. Maleamate amidase that transforms maleamate into maleate and ammonia in the aerobic nicotinate degradation pathway. The protein is Maleamate amidohydrolase (nicF) of Pseudomonas putida (strain ATCC 47054 / DSM 6125 / CFBP 8728 / NCIMB 11950 / KT2440).